Here is a 561-residue protein sequence, read N- to C-terminus: Putative transport protein KPK_3686 (561 aa).

5 consecutive transmembrane segments (helical) span residues 8-28 (LLNGNYILLLFVVLALGLCLG), 37-57 (LGNSIGVLVVSLLLGQQHFAI), 66-86 (FMLFIFCVGVEAGPNFFSIFF), 94-114 (MLALVMVGSAMLIATVLGKVF), and 158-178 (HLSLGYALTYLVGLVSLIVGA). RCK C-terminal domains follow at residues 202–288 (LDTD…SFRN) and 292–373 (VFDR…RIGF). 5 consecutive transmembrane segments (helical) span residues 383-403 (LLAFCAFFIVGLMIGMITFQF), 406-426 (FSFGIGNAAGLLFAGIMLGFL), 447-467 (FGLMVFMAGVGLSAGAGINNG), 478-498 (AGLIVSLLPVVICFLFGAYVL), and 540-560 (AIANVLLTLAGTLIVIIWPGL).

The protein belongs to the AAE transporter (TC 2.A.81) family. YbjL subfamily.

It localises to the cell membrane. The polypeptide is Putative transport protein KPK_3686 (Klebsiella pneumoniae (strain 342)).